The following is an 841-amino-acid chain: MAP7 domain-containing protein 1 (841 aa).

Disordered regions lie at residues 1-151 (MESG…ERAK) and 184-208 (EQRL…EKNK). Positions 22–52 (PPEPRPSPEGDPSPPPPPMSALVPDTPPDTP) are enriched in pro residues. A phosphothreonine mark is found at Thr47 and Thr51. 3 positions are modified to phosphoserine: Ser70, Ser86, and Ser93. At Thr97 the chain carries Phosphothreonine. Phosphoserine occurs at positions 113 and 116. The residue at position 118 (Thr118) is a Phosphothreonine. Phosphoserine is present on residues Ser123 and Ser125. The stretch at 128–222 (TKQEVKKAGE…AAIQRSVKKT (95 aa)) forms a coiled coil. The span at 130–151 (QEVKKAGERHKLAKERREERAK) shows a compositional bias: basic and acidic residues. Phosphoserine is present on residues Ser254, Ser273, Ser313, Ser366, and Ser399. The tract at residues 316-813 (TLPRNGRDQG…PSGDKSLSRT (498 aa)) is disordered. A compositionally biased stretch (polar residues) spans 365-377 (ASASPLTPCSVTR). Positions 405-435 (RRPEASPVQKKEKKDKERENEKEKSALARER) are enriched in basic and acidic residues. Residues 412–441 (VQKKEKKDKERENEKEKSALARERSLKKRQ) are a coiled coil. 5 positions are modified to phosphoserine: Ser442, Ser446, Ser452, Ser454, and Ser460. Residues 460–473 (SPKSKARPSSPSTS) show a composition bias toward low complexity. Lys462 participates in a covalent cross-link: Glycyl lysine isopeptide (Lys-Gly) (interchain with G-Cter in SUMO2). Phosphoserine occurs at positions 479 and 496. Pro residues predominate over residues 479–497 (SPCPSPGPGHTLPPKPPSP). Over residues 523 to 539 (PEDKSQSKRRASNEKES) the composition is skewed to basic and acidic residues. Phosphoserine occurs at positions 544, 548, and 552. The segment covering 544 to 561 (SPAPSPAPSPTPAPPQKE) has biased composition (pro residues). Thr554 is subject to Phosphothreonine. The span at 562-576 (QPPAETPTDAAVLTS) shows a compositional bias: low complexity. Residues 577-586 (PPAPAPPVTP) show a composition bias toward pro residues. Residues 593-721 (TTDREEATRL…LEEIMKRTRK (129 aa)) are a coiled coil. The span at 594-735 (TDREEATRLL…ETKQKQDSKE (142 aa)) shows a compositional bias: basic and acidic residues. A phosphoserine mark is found at Ser742 and Ser753. Phosphothreonine occurs at positions 813 and 816. Ser834 carries the post-translational modification Phosphoserine.

This sequence belongs to the MAP7 family.

It localises to the cytoplasm. Its subcellular location is the cytoskeleton. It is found in the spindle. The protein localises to the microtubule organizing center. The protein resides in the centrosome. It localises to the midbody. In terms of biological role, microtubule-stabilizing protein involved in the control of cell motility and neurite outgrowth. Facilitate microtubule stabilization through the maintenance of acetylated stable microtubules. The polypeptide is MAP7 domain-containing protein 1 (MAP7D1) (Homo sapiens (Human)).